A 60-amino-acid chain; its full sequence is Large ribosomal subunit protein bL32 (60 aa).

Belongs to the bacterial ribosomal protein bL32 family.

This Streptococcus mutans serotype c (strain ATCC 700610 / UA159) protein is Large ribosomal subunit protein bL32.